The following is a 121-amino-acid chain: UPF0102 protein BVU_1879 (121 aa).

It belongs to the UPF0102 family.

In Phocaeicola vulgatus (strain ATCC 8482 / DSM 1447 / JCM 5826 / CCUG 4940 / NBRC 14291 / NCTC 11154) (Bacteroides vulgatus), this protein is UPF0102 protein BVU_1879.